Reading from the N-terminus, the 123-residue chain is Small ribosomal subunit protein bS16 (123 aa).

Positions 86–123 (PVRAEQTKQPQPKAKAQQRAKDQAERDAAAAAEAAAGE) are disordered. Residues 93-102 (KQPQPKAKAQ) are compositionally biased toward low complexity. Positions 104–113 (RAKDQAERDA) are enriched in basic and acidic residues. Positions 114-123 (AAAAEAAAGE) are enriched in low complexity.

This sequence belongs to the bacterial ribosomal protein bS16 family.

The sequence is that of Small ribosomal subunit protein bS16 from Paramagnetospirillum magneticum (strain ATCC 700264 / AMB-1) (Magnetospirillum magneticum).